The chain runs to 74 residues: RNA-binding protein Hfq (74 aa).

The Sm domain maps to 9 to 69 (DQFLNQLRKE…ISTFVPQKNV (61 aa)).

Belongs to the Hfq family. Homohexamer.

RNA chaperone that binds small regulatory RNA (sRNAs) and mRNAs to facilitate mRNA translational regulation in response to envelope stress, environmental stress and changes in metabolite concentrations. Also binds with high specificity to tRNAs. In Bacillus cereus (strain Q1), this protein is RNA-binding protein Hfq.